A 134-amino-acid polypeptide reads, in one-letter code: Small ribosomal subunit protein uS11 (134 aa).

The protein belongs to the universal ribosomal protein uS11 family. Part of the 30S ribosomal subunit. Interacts with proteins S7 and S18. Binds to IF-3.

Located on the platform of the 30S subunit, it bridges several disparate RNA helices of the 16S rRNA. Forms part of the Shine-Dalgarno cleft in the 70S ribosome. The sequence is that of Small ribosomal subunit protein uS11 from Corynebacterium jeikeium (strain K411).